The primary structure comprises 285 residues: Chalcone synthase 6-4 (285 aa).

Residue Cys60 is part of the active site.

Belongs to the thiolase-like superfamily. Chalcone/stilbene synthases family.

The catalysed reaction is (E)-4-coumaroyl-CoA + 3 malonyl-CoA + 3 H(+) = 2',4,4',6'-tetrahydroxychalcone + 3 CO2 + 4 CoA. It participates in secondary metabolite biosynthesis; flavonoid biosynthesis. Functionally, the primary product of this enzyme is 4,2',4',6'-tetrahydroxychalcone (also termed naringenin-chalcone or chalcone) which can under specific conditions spontaneously isomerize into naringenin. The sequence is that of Chalcone synthase 6-4 (CHS6-4) from Medicago sativa (Alfalfa).